Reading from the N-terminus, the 563-residue chain is MAFNFNWSPLTADAEFYQRAQEMLTAALNKSPKPPIIKDDILVNELNLGSVPPDLEILEIGDLAEDRFRGIFKMCYSGDAFLTLKTRVQANPLNNHLFSKPSFTSPQPLAADAGLTIPLQITLSEIKLSAFIIVVFSKQKGLTLVFRNDPLESLKVSSTFDSIPFIKDYLQKEIEQQLRTLMMDELPAIIHRLSLRLWCPEYRGKEDQEMAEAVKKTKDEVAIDPFASPPQDAVDARGNVLDASEISNLSLDGGSEIHSLFSQKNLLRLAALTNSHRTLSLFTPSIRDAVFRAWAPSERGDSAGTTTPATTSLHRPQSSLGGQSTTYTFSNRSSDDGHGSMPSRPSLVNMNSATTGLSLGANRGSRSHTTRKKKNRVVNLRKSKTTDNVSESGESETASITAASEPIVQSRIPEEPEDIPVTPPPGKVRFNSIDLGDSPKKLQPSRSITPEQGNMNQIPTLTVEPSTPIHSENQKRPAYNQSSFTSYTSEKSATTPPHTQFSYPHGLHFSATESPSGILEQAWIMKMASELARRRHDKTAREGFWSTSSNGDDAPPAYEPKAL.

One can recognise an SMP-LTD domain in the interval 1 to 195 (MAFNFNWSPL…LPAIIHRLSL (195 aa)). Disordered stretches follow at residues 298 to 460 (ERGD…QIPT) and 535 to 563 (RHDK…PKAL). 2 stretches are compositionally biased toward polar residues: residues 303–332 (AGTT…FSNR) and 346–357 (SLVNMNSATTGL). A compositionally biased stretch (basic residues) spans 365 to 383 (SRSHTTRKKKNRVVNLRKS). 2 stretches are compositionally biased toward polar residues: residues 386-402 (TDNV…SITA) and 444-460 (PSRS…QIPT).

Belongs to the MDM34 family. In terms of assembly, component of the ER-mitochondria encounter structure (ERMES) or MDM complex, composed of mmm1, mdm10, mdm12 and mdm34.

The protein localises to the mitochondrion outer membrane. Its function is as follows. Component of the ERMES/MDM complex, which serves as a molecular tether to connect the endoplasmic reticulum (ER) and mitochondria. Components of this complex are involved in the control of mitochondrial shape and protein biogenesis, and function in nonvesicular lipid trafficking between the ER and mitochondria. Mdm34 is required for the interaction of the ER-resident membrane protein mmm1 and the outer mitochondrial membrane-resident beta-barrel protein mdm10. The protein is Mitochondrial distribution and morphology protein 34 of Sclerotinia sclerotiorum (strain ATCC 18683 / 1980 / Ss-1) (White mold).